Here is a 255-residue protein sequence, read N- to C-terminus: Triosephosphate isomerase (255 aa).

A substrate-binding site is contributed by 9–11 (NWK). Catalysis depends on histidine 95, which acts as the Electrophile. Catalysis depends on glutamate 167, which acts as the Proton acceptor. Substrate-binding positions include glycine 173, serine 212, and 233–234 (GG).

This sequence belongs to the triosephosphate isomerase family. In terms of assembly, homodimer.

The protein resides in the cytoplasm. It carries out the reaction D-glyceraldehyde 3-phosphate = dihydroxyacetone phosphate. It participates in carbohydrate biosynthesis; gluconeogenesis. It functions in the pathway carbohydrate degradation; glycolysis; D-glyceraldehyde 3-phosphate from glycerone phosphate: step 1/1. Its function is as follows. Involved in the gluconeogenesis. Catalyzes stereospecifically the conversion of dihydroxyacetone phosphate (DHAP) to D-glyceraldehyde-3-phosphate (G3P). This is Triosephosphate isomerase from Enterobacter cloacae.